Here is a 545-residue protein sequence, read N- to C-terminus: CTP synthase (545 aa).

Residues 1–266 (MTTNYIFVTG…DDYICKRFSL (266 aa)) form an amidoligase domain region. Ser14 is a binding site for CTP. Ser14 lines the UTP pocket. ATP-binding positions include 15–20 (SLGKGI) and Asp72. Residues Asp72 and Glu140 each contribute to the Mg(2+) site. Residues 147–149 (DIE), 187–192 (KTKPTQ), and Lys223 contribute to the CTP site. UTP is bound by residues 187-192 (KTKPTQ) and Lys223. Residue 239–241 (KDV) participates in ATP binding. A Glutamine amidotransferase type-1 domain is found at 291 to 542 (TIGMVGKYIE…VKAASEHQKR (252 aa)). Gly352 serves as a coordination point for L-glutamine. The active-site Nucleophile; for glutamine hydrolysis is the Cys379. Residues 380–383 (LGMQ), Glu403, and Arg470 each bind L-glutamine. Residues His515 and Glu517 contribute to the active site.

The protein belongs to the CTP synthase family. Homotetramer.

The catalysed reaction is UTP + L-glutamine + ATP + H2O = CTP + L-glutamate + ADP + phosphate + 2 H(+). It carries out the reaction L-glutamine + H2O = L-glutamate + NH4(+). The enzyme catalyses UTP + NH4(+) + ATP = CTP + ADP + phosphate + 2 H(+). It functions in the pathway pyrimidine metabolism; CTP biosynthesis via de novo pathway; CTP from UDP: step 2/2. Its activity is regulated as follows. Allosterically activated by GTP, when glutamine is the substrate; GTP has no effect on the reaction when ammonia is the substrate. The allosteric effector GTP functions by stabilizing the protein conformation that binds the tetrahedral intermediate(s) formed during glutamine hydrolysis. Inhibited by the product CTP, via allosteric rather than competitive inhibition. Its function is as follows. Catalyzes the ATP-dependent amination of UTP to CTP with either L-glutamine or ammonia as the source of nitrogen. Regulates intracellular CTP levels through interactions with the four ribonucleotide triphosphates. The protein is CTP synthase of Salmonella arizonae (strain ATCC BAA-731 / CDC346-86 / RSK2980).